Consider the following 493-residue polypeptide: 3-octaprenyl-4-hydroxybenzoate carboxy-lyase (493 aa).

Asn-172 lines the Mn(2+) pocket. Residues 175 to 177 (IYR), 189 to 191 (RWL), and 194 to 195 (RG) each bind prenylated FMN. Position 238 (Glu-238) interacts with Mn(2+). Asp-287 (proton donor) is an active-site residue.

The protein belongs to the UbiD family. Homohexamer. Prenylated FMN serves as cofactor. It depends on Mn(2+) as a cofactor.

It localises to the cell membrane. It carries out the reaction a 4-hydroxy-3-(all-trans-polyprenyl)benzoate + H(+) = a 2-(all-trans-polyprenyl)phenol + CO2. It participates in cofactor biosynthesis; ubiquinone biosynthesis. In terms of biological role, catalyzes the decarboxylation of 3-octaprenyl-4-hydroxy benzoate to 2-octaprenylphenol, an intermediate step in ubiquinone biosynthesis. This is 3-octaprenyl-4-hydroxybenzoate carboxy-lyase from Shewanella woodyi (strain ATCC 51908 / MS32).